Here is a 474-residue protein sequence, read N- to C-terminus: Dol-P-Glc:Glc(2)Man(9)GlcNAc(2)-PP-Dol alpha-1,2-glucosyltransferase (474 aa).

Topologically, residues methionine 1–glycine 6 are cytoplasmic. The helical transmembrane segment at tyrosine 7 to phenylalanine 27 threads the bilayer. The Extracellular portion of the chain corresponds to serine 28–threonine 64. Residues leucine 65–tryptophan 85 form a helical membrane-spanning segment. Residues serine 86 to arginine 97 lie on the Cytoplasmic side of the membrane. The chain crosses the membrane as a helical span at residues phenylalanine 98–isoleucine 118. Topologically, residues glutamine 119–serine 126 are extracellular. The chain crosses the membrane as a helical span at residues serine 127–asparagine 147. The Cytoplasmic segment spans residues phenylalanine 148 to tyrosine 150. A helical membrane pass occupies residues tyrosine 151–asparagine 171. Over histidine 172 to serine 175 the chain is Extracellular. The chain crosses the membrane as a helical span at residues alanine 176–cysteine 196. Residues alanine 197–tryptophan 256 lie on the Cytoplasmic side of the membrane. The helical transmembrane segment at proline 257–valine 277 threads the bilayer. The Extracellular segment spans residues glycine 278–histidine 283. Residues glutamate 284–phenylalanine 304 traverse the membrane as a helical segment. Topologically, residues proline 305 to leucine 317 are cytoplasmic. A helical membrane pass occupies residues serine 318–valine 338. Residues tryptophan 339–glutamine 365 are Extracellular-facing. The chain crosses the membrane as a helical span at residues arginine 366–alanine 386. At aspartate 387–lysine 392 the chain is on the cytoplasmic side. A helical membrane pass occupies residues serine 393 to leucine 413. The Extracellular portion of the chain corresponds to leucine 414–serine 436. Residues arginine 437 to leucine 457 form a helical membrane-spanning segment. Over asparagine 458–methionine 473 the chain is Cytoplasmic.

The protein belongs to the ALG10 glucosyltransferase family. Interacts with KCNH1; may regulate KCNH1, possibly by regulating its N-glycosylation. Interacts with KCNH2; may reduce KCNH2 sensitivity to classic proarrhythmic drug blockade, possibly by regulating its N-glycosylation. Highly expressed in brain, skeletal muscle, uterus, small intestine and liver. Moderately expressed in lung and kidney. Weakly expressed in heart and stomach.

The protein localises to the endoplasmic reticulum membrane. It carries out the reaction an alpha-D-Glc-(1-&gt;3)-alpha-D-Glc-(1-&gt;3)-alpha-D-Man-(1-&gt;2)-alpha-D-Man-(1-&gt;2)-alpha-D-Man-(1-&gt;3)-[alpha-D-Man-(1-&gt;2)-alpha-D-Man-(1-&gt;3)-[alpha-D-Man-(1-&gt;2)-alpha-D-Man-(1-&gt;6)]-alpha-D-Man-(1-&gt;6)]-beta-D-Man-(1-&gt;4)-beta-D-GlcNAc-(1-&gt;4)-alpha-D-GlcNAc-diphospho-di-trans,poly-cis-dolichol + a di-trans,poly-cis-dolichyl beta-D-glucosyl phosphate = a alpha-D-Glc-(1-&gt;2)-alpha-D-Glc-(1-&gt;3)-alpha-D-Glc-(1-&gt;3)-alpha-D-Man-(1-&gt;2)-alpha-D-Man-(1-&gt;2)-alpha-D-Man-(1-&gt;3)-[alpha-D-Man-(1-&gt;2)-alpha-D-Man-(1-&gt;3)-[alpha-D-Man-(1-&gt;2)-alpha-D-Man-(1-&gt;6)]-alpha-D-Man-(1-&gt;6)]-beta-D-Man-(1-&gt;4)-beta-D-GlcNAc-(1-&gt;4)-alpha-D-GlcNAc-diphospho-di-trans,poly-cis-dolichol + a di-trans,poly-cis-dolichyl phosphate + H(+). The protein operates within protein modification; protein glycosylation. Dol-P-Glc:Glc(2)Man(9)GlcNAc(2)-PP-Dol alpha-1,2-glucosyltransferase that operates in the biosynthetic pathway of dolichol-linked oligosaccharides, the glycan precursors employed in protein asparagine (N)-glycosylation. The assembly of dolichol-linked oligosaccharides begins on the cytosolic side of the endoplasmic reticulum membrane and finishes in its lumen. The sequential addition of sugars to dolichol pyrophosphate produces dolichol-linked oligosaccharides containing fourteen sugars, including two GlcNAcs, nine mannoses and three glucoses. Once assembled, the oligosaccharide is transferred from the lipid to nascent proteins by oligosaccharyltransferases. In the lumen of the endoplasmic reticulum, adds the third and last glucose residue from dolichyl phosphate glucose (Dol-P-Glc) onto the lipid-linked oligosaccharide intermediate Glc(2)Man(9)GlcNAc(2)-PP-Dol to produce Glc(3)Man(9)GlcNAc(2)-PP-Dol. This is Dol-P-Glc:Glc(2)Man(9)GlcNAc(2)-PP-Dol alpha-1,2-glucosyltransferase from Rattus norvegicus (Rat).